The chain runs to 341 residues: Phosphatidylserine decarboxylase proenzyme (341 aa).

Residues aspartate 90, histidine 147, and serine 254 each act as charge relay system; for autoendoproteolytic cleavage activity in the active site. Serine 254 (schiff-base intermediate with substrate; via pyruvic acid; for decarboxylase activity) is an active-site residue. Serine 254 is modified (pyruvic acid (Ser); by autocatalysis). Residues 287–341 are disordered; sequence RQDEQTPVVFPEGTELEENDAAQPPVAATSEPVQADGQNPAAEVSGQTGHKPDAP.

The protein belongs to the phosphatidylserine decarboxylase family. PSD-B subfamily. Prokaryotic type I sub-subfamily. In terms of assembly, heterodimer of a large membrane-associated beta subunit and a small pyruvoyl-containing alpha subunit. The cofactor is pyruvate. Is synthesized initially as an inactive proenzyme. Formation of the active enzyme involves a self-maturation process in which the active site pyruvoyl group is generated from an internal serine residue via an autocatalytic post-translational modification. Two non-identical subunits are generated from the proenzyme in this reaction, and the pyruvate is formed at the N-terminus of the alpha chain, which is derived from the carboxyl end of the proenzyme. The autoendoproteolytic cleavage occurs by a canonical serine protease mechanism, in which the side chain hydroxyl group of the serine supplies its oxygen atom to form the C-terminus of the beta chain, while the remainder of the serine residue undergoes an oxidative deamination to produce ammonia and the pyruvoyl prosthetic group on the alpha chain. During this reaction, the Ser that is part of the protease active site of the proenzyme becomes the pyruvoyl prosthetic group, which constitutes an essential element of the active site of the mature decarboxylase.

Its subcellular location is the cell membrane. The enzyme catalyses a 1,2-diacyl-sn-glycero-3-phospho-L-serine + H(+) = a 1,2-diacyl-sn-glycero-3-phosphoethanolamine + CO2. Its pathway is phospholipid metabolism; phosphatidylethanolamine biosynthesis; phosphatidylethanolamine from CDP-diacylglycerol: step 2/2. In terms of biological role, catalyzes the formation of phosphatidylethanolamine (PtdEtn) from phosphatidylserine (PtdSer). The sequence is that of Phosphatidylserine decarboxylase proenzyme from Pectobacterium atrosepticum (strain SCRI 1043 / ATCC BAA-672) (Erwinia carotovora subsp. atroseptica).